The following is a 330-amino-acid chain: Putative quinone oxidoreductase YhfP (330 aa).

Residues Tyr-45, 160–163 (TGGV), 182–184 (TGN), Arg-202, Leu-248, Ile-262, Ser-273, and Asn-320 contribute to the NADP(+) site.

It belongs to the zinc-containing alcohol dehydrogenase family. Quinone oxidoreductase subfamily. Homodimer, or homotetramer.

Its subcellular location is the cytoplasm. In Bacillus subtilis (strain 168), this protein is Putative quinone oxidoreductase YhfP (yhfP).